A 99-amino-acid polypeptide reads, in one-letter code: Mu-hexatoxin-Mg1c (99 aa).

Intrachain disulfides connect Cys-61-Cys-75, Cys-68-Cys-80, and Cys-74-Cys-94.

Belongs to the neurotoxin 14 (magi-1) family. 09 (magi-1) subfamily. In terms of tissue distribution, expressed by the venom gland.

Its subcellular location is the secreted. Its function is as follows. Inhibits voltage-gated sodium channels by binding to site 3. Insecticidal neurotoxin. The protein is Mu-hexatoxin-Mg1c of Macrothele gigas (Japanese funnel web spider).